We begin with the raw amino-acid sequence, 276 residues long: Large ribosomal subunit protein uL2 (276 aa).

2 disordered regions span residues 29–55 (PEKS…RHRG) and 219–276 (HVRG…RRTR). Residues 259-276 (TRNKKKQSSKLIVRRRTR) show a composition bias toward basic residues.

This sequence belongs to the universal ribosomal protein uL2 family. Part of the 50S ribosomal subunit. Forms a bridge to the 30S subunit in the 70S ribosome.

In terms of biological role, one of the primary rRNA binding proteins. Required for association of the 30S and 50S subunits to form the 70S ribosome, for tRNA binding and peptide bond formation. It has been suggested to have peptidyltransferase activity; this is somewhat controversial. Makes several contacts with the 16S rRNA in the 70S ribosome. This Rippkaea orientalis (strain PCC 8801 / RF-1) (Cyanothece sp. (strain PCC 8801)) protein is Large ribosomal subunit protein uL2.